The chain runs to 1097 residues: RecBCD enzyme subunit RecC (1097 aa).

It belongs to the RecC family. Heterotrimer of RecB, RecC and RecD. All subunits contribute to DNA-binding.

Functionally, a helicase/nuclease that prepares dsDNA breaks (DSB) for recombinational DNA repair. Binds to DSBs and unwinds DNA via a highly rapid and processive ATP-dependent bidirectional helicase activity. Holoenzyme degrades any linearized DNA that is unable to undergo homologous recombination. In the holoenzyme this subunit recognizes the wild-type Chi sequence, and when added to isolated RecB increases its ATP-dependent helicase processivity. Unlike the case in E.coli, suppresses RecA-dependent homologous recombination, is instead required for single-strand annealing pathway repair of DSB. The protein is RecBCD enzyme subunit RecC of Mycobacterium tuberculosis (strain ATCC 25618 / H37Rv).